We begin with the raw amino-acid sequence, 346 residues long: NADH-ubiquinone oxidoreductase chain 2 (346 aa).

Transmembrane regions (helical) follow at residues 7–27 (AIIT…NHWI), 59–79 (YFLT…MNMW), 93–115 (ISCT…HFWF), 151–171 (TTLL…GGLN), 178–198 (IMAF…TLSP), 200–220 (ILLL…LMIN), 242–262 (TMML…GFAP), 275–294 (LSMF…YFYL), and 325–345 (LATI…LKAI).

It belongs to the complex I subunit 2 family.

The protein localises to the mitochondrion inner membrane. It carries out the reaction a ubiquinone + NADH + 5 H(+)(in) = a ubiquinol + NAD(+) + 4 H(+)(out). Its function is as follows. Core subunit of the mitochondrial membrane respiratory chain NADH dehydrogenase (Complex I) that is believed to belong to the minimal assembly required for catalysis. Complex I functions in the transfer of electrons from NADH to the respiratory chain. The immediate electron acceptor for the enzyme is believed to be ubiquinone. The chain is NADH-ubiquinone oxidoreductase chain 2 (MT-ND2) from Pelomedusa subrufa (African side-necked turtle).